The sequence spans 347 residues: F-box/LRR-repeat/kelch-repeat protein At2g27520 (347 aa).

An F-box domain is found at 1-50 (MVRLDLPWDLVDEILSRLPATSLGRLRFTCKRWNALFKDPEFITKQFHKA). LRR repeat units lie at residues 59–82 (LSNFGVYSMSTNLKEIPNNIEIAQ), 152–177 (CKLVEIFELKSNSWRVLSKVHPNVEK), 196–220 (KFNILSFDFTTETFRSVPLPFLYQD), and 261–285 (LSWSKSFTLEFDSLRDLPVMSILRI). A Kelch 1 repeat occupies 138–187 (KSYDSYKILRITYGCKLVEIFELKSNSWRVLSKVHPNVEKHYYGGVSFKG). A Kelch 2 repeat occupies 306–347 (MIYIVGKNGFKKLSYEKDRSNLWRLPFFFSYVPSLVGLYPPM).

In Arabidopsis thaliana (Mouse-ear cress), this protein is F-box/LRR-repeat/kelch-repeat protein At2g27520.